Reading from the N-terminus, the 239-residue chain is MKISSIDSIFAGWDGSITEARRLQSDMAERIVLKDDLNLLSEPTLLAGFDVGFEDEGRTTRAAAVLMNACDLKLLETHVVRVPTSMPYVPGLLSFRELPALLQALTQLSRIPALVFVDGHGIAHPRRLGIAAHFGLVTNLPCIGVAKKRLVGDFVEPGTAFGEHTPILLHGTQVGWALRSKIRCKPLMISPGHKISLHSALTWTQRCLNGYRLPEPTRQADRLASRRGQKIVSDLPSLL.

The Mg(2+) site is built by aspartate 50 and aspartate 118.

The protein belongs to the endonuclease V family. Mg(2+) is required as a cofactor.

The protein localises to the cytoplasm. The catalysed reaction is Endonucleolytic cleavage at apurinic or apyrimidinic sites to products with a 5'-phosphate.. Its function is as follows. DNA repair enzyme involved in the repair of deaminated bases. Selectively cleaves double-stranded DNA at the second phosphodiester bond 3' to a deoxyinosine leaving behind the intact lesion on the nicked DNA. The polypeptide is Endonuclease V (Xylella fastidiosa (strain 9a5c)).